Reading from the N-terminus, the 239-residue chain is Leucyl/phenylalanyl-tRNA--protein transferase (239 aa).

The protein belongs to the L/F-transferase family.

It is found in the cytoplasm. It catalyses the reaction N-terminal L-lysyl-[protein] + L-leucyl-tRNA(Leu) = N-terminal L-leucyl-L-lysyl-[protein] + tRNA(Leu) + H(+). It carries out the reaction N-terminal L-arginyl-[protein] + L-leucyl-tRNA(Leu) = N-terminal L-leucyl-L-arginyl-[protein] + tRNA(Leu) + H(+). The catalysed reaction is L-phenylalanyl-tRNA(Phe) + an N-terminal L-alpha-aminoacyl-[protein] = an N-terminal L-phenylalanyl-L-alpha-aminoacyl-[protein] + tRNA(Phe). Its function is as follows. Functions in the N-end rule pathway of protein degradation where it conjugates Leu, Phe and, less efficiently, Met from aminoacyl-tRNAs to the N-termini of proteins containing an N-terminal arginine or lysine. The protein is Leucyl/phenylalanyl-tRNA--protein transferase of Aliivibrio fischeri (strain MJ11) (Vibrio fischeri).